Consider the following 456-residue polypeptide: tRNA modification GTPase MnmE (456 aa).

(6S)-5-formyl-5,6,7,8-tetrahydrofolate is bound by residues Arg24, Glu81, and Lys120. One can recognise a TrmE-type G domain in the interval Gly216–Gly379. Asn226 contributes to the K(+) binding site. Residues Asn226–Ser231, Thr245–Thr251, Asp270–Gly273, and Asn335–Asp338 each bind GTP. Mg(2+) is bound at residue Ser230. K(+) contacts are provided by Thr245, Ile247, and Thr250. Thr251 lines the Mg(2+) pocket. Residue Lys456 participates in (6S)-5-formyl-5,6,7,8-tetrahydrofolate binding.

This sequence belongs to the TRAFAC class TrmE-Era-EngA-EngB-Septin-like GTPase superfamily. TrmE GTPase family. As to quaternary structure, homodimer. Heterotetramer of two MnmE and two MnmG subunits. The cofactor is K(+).

The protein resides in the cytoplasm. Functionally, exhibits a very high intrinsic GTPase hydrolysis rate. Involved in the addition of a carboxymethylaminomethyl (cmnm) group at the wobble position (U34) of certain tRNAs, forming tRNA-cmnm(5)s(2)U34. In Pseudomonas putida (strain GB-1), this protein is tRNA modification GTPase MnmE.